An 86-amino-acid chain; its full sequence is Molybdopterin synthase sulfur carrier subunit (86 aa).

Glycine 86 bears the 1-thioglycine; alternate mark. Glycine 86 carries the glycyl adenylate; alternate modification.

The protein belongs to the MoaD family. MOCS2A subfamily. Heterotetramer; composed of 2 small (mocs2s) and 2 large (mocs2l) subunits. C-terminal thiocarboxylation occurs in 2 steps, it is first acyl-adenylated (-COAMP) via the hesA/moeB/thiF part of mocs3, then thiocarboxylated (-COSH) via the rhodanese domain of mocs3.

Its subcellular location is the cytoplasm. It functions in the pathway cofactor biosynthesis; molybdopterin biosynthesis. Functionally, acts as a sulfur carrier required for molybdopterin biosynthesis. Component of the molybdopterin synthase complex that catalyzes the conversion of precursor Z into molybdopterin by mediating the incorporation of 2 sulfur atoms into precursor Z to generate a dithiolene group. In the complex, serves as sulfur donor by being thiocarboxylated (-COSH) at its C-terminus by mocs3. After interaction with mocs2l, the sulfur is then transferred to precursor Z to form molybdopterin. The polypeptide is Molybdopterin synthase sulfur carrier subunit (mocs2s) (Dictyostelium discoideum (Social amoeba)).